The primary structure comprises 296 residues: Probable endonuclease 4 (296 aa).

Residues histidine 68, histidine 109, glutamate 144, aspartate 178, histidine 181, histidine 213, aspartate 226, histidine 228, and glutamate 258 each coordinate Zn(2+).

It belongs to the AP endonuclease 2 family. Zn(2+) serves as cofactor.

It carries out the reaction Endonucleolytic cleavage to 5'-phosphooligonucleotide end-products.. Its function is as follows. Endonuclease IV plays a role in DNA repair. It cleaves phosphodiester bonds at apurinic or apyrimidinic (AP) sites, generating a 3'-hydroxyl group and a 5'-terminal sugar phosphate. This Staphylococcus aureus (strain Mu3 / ATCC 700698) protein is Probable endonuclease 4.